Reading from the N-terminus, the 380-residue chain is DNA replication and repair protein RecF (380 aa).

30–37 (GENAQGKT) contacts ATP.

Belongs to the RecF family.

The protein localises to the cytoplasm. In terms of biological role, the RecF protein is involved in DNA metabolism; it is required for DNA replication and normal SOS inducibility. RecF binds preferentially to single-stranded, linear DNA. It also seems to bind ATP. This is DNA replication and repair protein RecF from Synechococcus sp. (strain JA-2-3B'a(2-13)) (Cyanobacteria bacterium Yellowstone B-Prime).